Reading from the N-terminus, the 2627-residue chain is Telomerase protein component 1 (2627 aa).

4 TEP1 N-terminal repeats span residues 1–30, 31–60, 61–90, and 91–120; these read MEKLHGHVSAHPDILSLENRCLAMLPDLQP, LEKLHQHVSTHSDILSLKNQCLATLPDLKT, MEKPHGYVSAHPDILSLENQCLATLSDLKT, and MEKPHGHVSAHPDILSLENRCLATLSSLKS. Disordered stretches follow at residues 193-214 and 383-402; these read FDSEEKKGAETQMPSYSLSLGE and RKHRAKRHPRRPPRSPGMEP. Positions 223–676 constitute a TROVE domain; sequence VKLTSGDSES…VKHSLPLLPG (454 aa). Basic residues predominate over residues 383–395; sequence RKHRAKRHPRRPP. Residues 1162–1490 form the NACHT domain; the sequence is RLSLVTGQSG…PLERPGARLC (329 aa). 1168–1175 serves as a coordination point for ATP; it reads GQSGQGKT. 19 WD repeats span residues 1411-1448, 1674-1713, 1716-1754, 1757-1796, 1798-1837, 1840-1879, 1882-1921, 1925-1964, 1967-2005, 2008-2047, 2059-2098, 2105-2143, 2146-2183, 2185-2233, 2236-2275, 2278-2317, 2319-2355, 2368-2417, and 2459-2500; these read VLPQALTALEVTRSGLTVDQLHGVLSVWRTLPKGTKSW, AVSSSPTAVAFSTNGQRAAVGTANGTVYLLDLRTWQEEKS, SGCDGISACLFLSDDTLFLTAFDGLLELWDLQHGCRVLQ, AHQYQITGCCLSPDCRLLATVCLGGCLKLWDTVRGQLAFQ, TYPKSLNCVAFHPEGQVIATGSWAGSISFFQVDGLKVTKD, APGASIRTLAFNVPGGVVAVGRLDSMVELWAWREGARLAA, AHHGFVAAALFLHAGCQLLTAGEDGKVQVWSGSLGRPRGH, LSLSPALSVALSPDGDRVAVGYRADGIRIYKISSGSQGAQ, ALDVAVSALAWLSPKVLVSGAEDGSLQGWALKECSLQSL, LSRFQKPVLGLATSQELLASASEDFTVQLWPRQLLTRPHK, GHEGPVSCCSFSTDGGSLATGGRDRSLLCWDVRTPKTPVL, CHRDWVTGCAWTKDNLLISCSSDGSVGLWDPESGQRLGQ, GHQSAVSAVAAVEEHVVSVSRDGTLKVWDHQGVELTSI, AHSG…QTHT, GHSGPVRAAAVSETSGLMLTASEDGSVRLWQVPKEADDTC, RSSAAVTAVAWAPDGSMAVSGNQAGELILWQEAKAVATAQ, PGHIGALIWSSAHTFFVLSADEKISEWQVKLRKGSAP, EDLG…PMIL, and NPSR…GEWT. The span at 2506–2522 shows a compositional bias: polar residues; the sequence is QKKANTPETQTPGTDPS. A disordered region spans residues 2506–2551; sequence QKKANTPETQTPGTDPSTCRESDASMDSDASMDSEPTPHLKTRQRR. 2 WD repeats span residues 2553–2590 and 2592–2626; these read IHSGSVTALHVLPELLVTASKDRDVKLWERPSMQLLGL and RCEGSVSCLEPWLGANSTLQLAVGDVQGNVYFLNW.

Associated component of the telomerase holoenzyme complex. Component of the vault ribonucleoprotein particle, at least composed of MVP, PARP4 and one or more vault RNAs (vRNAs). Binds to VAULTRC1, VAULTRC2 and VAULTRC4/hvg4 vRNAs. In terms of tissue distribution, ubiquitous.

The protein localises to the nucleus. It is found in the chromosome. Its subcellular location is the telomere. Its function is as follows. Component of the telomerase ribonucleoprotein complex that is essential for the replication of chromosome termini. Also a component of the ribonucleoprotein vaults particle, a multi-subunit structure involved in nucleo-cytoplasmic transport. Responsible for the localizing and stabilizing vault RNA (vRNA) association in the vault ribonucleoprotein particle. Binds to TERC. This is Telomerase protein component 1 (TEP1) from Homo sapiens (Human).